Consider the following 151-residue polypeptide: Ribosome maturation factor RimP (151 aa).

The protein belongs to the RimP family.

The protein localises to the cytoplasm. Required for maturation of 30S ribosomal subunits. In Desulfotalea psychrophila (strain LSv54 / DSM 12343), this protein is Ribosome maturation factor RimP.